A 388-amino-acid polypeptide reads, in one-letter code: Probable proton-coupled zinc antiporter SLC30A3 (388 aa).

A disordered region spans residues 1-41 (MEPSLATGGSETTRLVSARDRSSAGGGLRLKSLFTEPSEPL). Residues 1 to 75 (MEPSLATGGS…SPERVQARRQ (75 aa)) lie on the Cytoplasmic side of the membrane. Phosphoserine occurs at positions 63 and 66. A helical membrane pass occupies residues 76–96 (LYAACAVCFIFMAGEVVGGYL). The Lumenal segment spans residues 97–105 (AHSLAIMTD). The chain crosses the membrane as a helical span at residues 106–126 (AAHLLADIGSMLASLFSLWLS). The Zn(2+) site is built by H108 and D112. The Cytoplasmic segment spans residues 127–145 (TRPATRTMTFGWHRSETLG). A helical membrane pass occupies residues 146-166 (ALASVVSLWIVTGILLYLAFL). At 167 to 177 (RLLHSDYHIEA) the chain is on the lumenal side. The chain crosses the membrane as a helical span at residues 178–198 (GAMLLTASIAVCANLLMAFVL). Residues 199–235 (HQTGAPHSHGSTGAEYAPLEEGHGYPMSLGNTSVRAA) are Cytoplasmic-facing. Residues 236–256 (FVHVLGDLLQSFGVLAASILI) form a helical membrane-spanning segment. H238 and D242 together coordinate Zn(2+). Residues 257 to 263 (YFKPQYK) are Lumenal-facing. The chain crosses the membrane as a helical span at residues 264–284 (VADPISTFLFSICALGSTAPT). Residues 285 to 388 (LRDVLLVLME…CLRCQEPSQA (104 aa)) are Cytoplasmic-facing.

The protein belongs to the cation diffusion facilitator (CDF) transporter (TC 2.A.4) family. SLC30A subfamily. Homodimer. Homodimerization is negligible compared to the human protein. It could explain the lower efficiency of zinc transport. Interacts with TMEM163. As to expression, expression is restricted to brain (at protein level). In the brain, most abundant in hippocampus and cerebral cortex. The mRNA is also detected in testis, expression being restricted to germ cells and highest in pachytene spermatocytes and round spermatids.

It is found in the cytoplasmic vesicle. The protein localises to the secretory vesicle. It localises to the synaptic vesicle membrane. The protein resides in the synapse. Its subcellular location is the synaptosome. It is found in the late endosome membrane. The protein localises to the lysosome membrane. The enzyme catalyses Zn(2+)(in) + 2 H(+)(out) = Zn(2+)(out) + 2 H(+)(in). Its function is as follows. Probable proton-coupled zinc ion antiporter mediating the import of zinc from cytoplasm into synaptic vesicles and participating to cellular zinc ion homeostasis in the brain. This chain is Probable proton-coupled zinc antiporter SLC30A3, found in Mus musculus (Mouse).